A 477-amino-acid chain; its full sequence is Tryptophan biosynthesis protein TrpCF (477 aa).

The tract at residues Ser13–Glu275 is indole-3-glycerol phosphate synthase. The interval Asn276 to Tyr477 is N-(5'-phosphoribosyl)anthranilate isomerase.

It in the N-terminal section; belongs to the TrpC family. In the C-terminal section; belongs to the TrpF family. Monomer.

It carries out the reaction N-(5-phospho-beta-D-ribosyl)anthranilate = 1-(2-carboxyphenylamino)-1-deoxy-D-ribulose 5-phosphate. It catalyses the reaction 1-(2-carboxyphenylamino)-1-deoxy-D-ribulose 5-phosphate + H(+) = (1S,2R)-1-C-(indol-3-yl)glycerol 3-phosphate + CO2 + H2O. Its pathway is amino-acid biosynthesis; L-tryptophan biosynthesis; L-tryptophan from chorismate: step 3/5. It participates in amino-acid biosynthesis; L-tryptophan biosynthesis; L-tryptophan from chorismate: step 4/5. Functionally, bifunctional enzyme that catalyzes two sequential steps of tryptophan biosynthetic pathway. The first reaction is catalyzed by the isomerase, coded by the TrpF domain; the second reaction is catalyzed by the synthase, coded by the TrpC domain. In Haemophilus influenzae (strain ATCC 51907 / DSM 11121 / KW20 / Rd), this protein is Tryptophan biosynthesis protein TrpCF (trpC).